The following is a 126-amino-acid chain: Small ribosomal subunit protein uS13 (126 aa).

A disordered region spans residues L96–K126.

The protein belongs to the universal ribosomal protein uS13 family. In terms of assembly, part of the 30S ribosomal subunit. Forms a loose heterodimer with protein S19. Forms two bridges to the 50S subunit in the 70S ribosome.

Functionally, located at the top of the head of the 30S subunit, it contacts several helices of the 16S rRNA. In the 70S ribosome it contacts the 23S rRNA (bridge B1a) and protein L5 of the 50S subunit (bridge B1b), connecting the 2 subunits; these bridges are implicated in subunit movement. Contacts the tRNAs in the A and P-sites. In Frankia alni (strain DSM 45986 / CECT 9034 / ACN14a), this protein is Small ribosomal subunit protein uS13.